The chain runs to 190 residues: Xanthine phosphoribosyltransferase (190 aa).

Xanthine is bound by residues leucine 20 and asparagine 27. 129–133 (ANGRA) lines the 5-phospho-alpha-D-ribose 1-diphosphate pocket. Lysine 157 serves as a coordination point for xanthine.

Belongs to the purine/pyrimidine phosphoribosyltransferase family. Xpt subfamily. As to quaternary structure, homodimer.

It is found in the cytoplasm. The enzyme catalyses XMP + diphosphate = xanthine + 5-phospho-alpha-D-ribose 1-diphosphate. It functions in the pathway purine metabolism; XMP biosynthesis via salvage pathway; XMP from xanthine: step 1/1. Functionally, converts the preformed base xanthine, a product of nucleic acid breakdown, to xanthosine 5'-monophosphate (XMP), so it can be reused for RNA or DNA synthesis. The sequence is that of Xanthine phosphoribosyltransferase from Clostridioides difficile (strain 630) (Peptoclostridium difficile).